The sequence spans 275 residues: 3-methyl-2-oxobutanoate hydroxymethyltransferase (275 aa).

2 residues coordinate Mg(2+): D49 and D88. Residues 49–50 (DS), D88, and K118 contribute to the 3-methyl-2-oxobutanoate site. Mg(2+) is bound at residue E120. The active-site Proton acceptor is the E187.

This sequence belongs to the PanB family. As to quaternary structure, homodecamer; pentamer of dimers. Mg(2+) serves as cofactor.

The protein localises to the cytoplasm. The catalysed reaction is 3-methyl-2-oxobutanoate + (6R)-5,10-methylene-5,6,7,8-tetrahydrofolate + H2O = 2-dehydropantoate + (6S)-5,6,7,8-tetrahydrofolate. The protein operates within cofactor biosynthesis; (R)-pantothenate biosynthesis; (R)-pantoate from 3-methyl-2-oxobutanoate: step 1/2. In terms of biological role, catalyzes the reversible reaction in which hydroxymethyl group from 5,10-methylenetetrahydrofolate is transferred onto alpha-ketoisovalerate to form ketopantoate. This chain is 3-methyl-2-oxobutanoate hydroxymethyltransferase, found in Brucella suis (strain ATCC 23445 / NCTC 10510).